A 248-amino-acid polypeptide reads, in one-letter code: Transcription factor Spi-C (248 aa).

Positions 111 to 194 form a DNA-binding region, ETS; sequence LRLFEYLHES…IRRKLTYQFS (84 aa).

The protein belongs to the ETS family. In terms of assembly, binds DNA as a monomer.

The protein resides in the nucleus. Controls the development of red pulp macrophages required for red blood cells recycling and iron homeostasis. Transcription factor that binds to the PU-box, a purine-rich DNA sequence (5'-GAGGA[AT]-3') that can act as a lymphoid-specific enhancer. Regulates VCAM1 gene expression. This is Transcription factor Spi-C (SPIC) from Bos taurus (Bovine).